Consider the following 833-residue polypeptide: Zinc phosphodiesterase ELAC protein 2 homolog (833 aa).

Residues 1–19 (MLGAIARKTVENRILVSRH) constitute a mitochondrion transit peptide. A compositionally biased stretch (pro residues) spans 624–646 (LTPPGSPGGPPGKRPRLPSPHLP). The interval 624–652 (LTPPGSPGGPPGKRPRLPSPHLPPSRDVL) is disordered.

Belongs to the RNase Z family. As to quaternary structure, homodimer. The cofactor is Zn(2+). In terms of tissue distribution, highly expressed in the germline.

The protein resides in the mitochondrion. Its subcellular location is the nucleus. The catalysed reaction is Endonucleolytic cleavage of RNA, removing extra 3' nucleotides from tRNA precursor, generating 3' termini of tRNAs. A 3'-hydroxy group is left at the tRNA terminus and a 5'-phosphoryl group is left at the trailer molecule.. Its function is as follows. Zinc phosphodiesterase, which displays some tRNA 3'-processing endonuclease activity. Probably involved in tRNA maturation, by removing a 3'-trailer from precursor tRNA. Involved in germline proliferation. May be required for both mitosis and meiosis in germ cells. Functionally, does not regulate the mitochondrial unfolded protein response following mitochondrial stress. In terms of biological role, plays a role in mitochondrial unfolded protein response. Upon mitochondrial stress is exported from the nucleus where its tRNA endonuclease activity is negatively regulated. In response to mitochondrial stress, might be involved in activating a transcriptional response in an ATFS-1- and DVE-1-dependent manner. May play a role in negatively regulating the mitochondrial membrane potential. This chain is Zinc phosphodiesterase ELAC protein 2 homolog, found in Caenorhabditis elegans.